We begin with the raw amino-acid sequence, 301 residues long: tRNA pseudouridine synthase B (301 aa).

Catalysis depends on D38, which acts as the Nucleophile.

The protein belongs to the pseudouridine synthase TruB family. Type 1 subfamily.

The enzyme catalyses uridine(55) in tRNA = pseudouridine(55) in tRNA. Its function is as follows. Responsible for synthesis of pseudouridine from uracil-55 in the psi GC loop of transfer RNAs. The chain is tRNA pseudouridine synthase B from Ehrlichia canis (strain Jake).